Here is a 250-residue protein sequence, read N- to C-terminus: MSSARYDRAITVFSPDGHLFQVEYAMEAVRKGTVAVGVRGKDVIVLGVEKKATAKLQDARSIRKIVKLDDHICLTFAGLTADSRVLISKALMECQSYRLTVEDSPSVEYISKFIAGIQQRYTQSGGVRPFGISTLIVGFDTDGTPNLYQTDPSGSYSSWKAAAIGRSSKSVGEFLEKNYTDVSEEESIKLAVRALLEIVESGNKNIEIAVIRNKQPIVLLDEQEIDKLVAVVEAEKEIQKEQEKSEKQQK.

Belongs to the peptidase T1A family. The 26S proteasome consists of a 20S proteasome core and two 19S regulatory subunits. The 20S proteasome core is composed of 28 subunits that are arranged in four stacked rings, resulting in a barrel-shaped structure. The two end rings are each formed by seven alpha subunits, and the two central rings are each formed by seven beta subunits. The catalytic chamber with the active sites is on the inside of the barrel.

The protein resides in the cytoplasm. It localises to the nucleus. In terms of biological role, the proteasome is a multicatalytic proteinase complex which is characterized by its ability to cleave peptides with Arg, Phe, Tyr, Leu, and Glu adjacent to the leaving group at neutral or slightly basic pH. The proteasome has an ATP-dependent proteolytic activity. In Dictyostelium discoideum (Social amoeba), this protein is Proteasome subunit alpha type-7 (psmA7).